The chain runs to 332 residues: Solute carrier family 25 member 16 (332 aa).

Solcar repeat units lie at residues 34 to 120 (FYWL…YKTF), 128 to 216 (SGHV…LKSV), and 238 to 328 (LKTH…MKQF). 6 consecutive transmembrane segments (helical) span residues 37–57 (LRSFLAGGIAGCCAKTTVAPL), 88–108 (GYLGLYKGNGAMMIRIFPYGA), 134–154 (LMAGSMAGMTAVICTYPLDVV), 191–211 (GLMPTILGMAPYAGVSFFTFG), 244–264 (LLCGGVAGAIAQTISYPFDVT), and 299–319 (GLYRGLSLNYIRCIPSQAVAF).

Belongs to the mitochondrial carrier (TC 2.A.29) family.

It localises to the mitochondrion inner membrane. In terms of biological role, may be involved in the transport of coenzyme A in the mitochondrial matrix. Very little is known about the physiological function of this carrier. This is Solute carrier family 25 member 16 from Mus musculus (Mouse).